The sequence spans 484 residues: Transmembrane protein 161B (484 aa).

A helical transmembrane segment spans residues 108 to 128 (LVDFTVAATVVYLITELYFCV). N-linked (GlcNAc...) asparagine glycosylation occurs at Asn136. A run of 2 helical transmembrane segments spans residues 137-157 (ISVV…FSLT) and 170-190 (SLCI…LIVT). A glycan (N-linked (GlcNAc...) asparagine) is linked at Asn204. 4 consecutive transmembrane segments (helical) span residues 229–249 (FKLI…FPGL), 266–286 (VTQT…LLWV), 368–388 (VFYY…MLLH), and 456–476 (LSFF…FGLF).

Belongs to the TMEM161 family.

Its subcellular location is the cell membrane. Functionally, essential for maintaining normal cardiac rhythm in the developing heart and for neonatal survival. Inhibits potassium and calcium currents in the cardiomyocytes, this assists in timely action potential repolarization and thereby maintains normal cardiac rhythm. In Danio rerio (Zebrafish), this protein is Transmembrane protein 161B (tmem161b).